The following is a 168-amino-acid chain: Ubiquitin-conjugating enzyme E2 7 (168 aa).

The segment at methionine 1 to threonine 21 is disordered. Residues alanine 6–glutamate 166 form the UBC core domain. The Glycyl thioester intermediate role is filled by cysteine 92.

Belongs to the ubiquitin-conjugating enzyme family.

The catalysed reaction is S-ubiquitinyl-[E1 ubiquitin-activating enzyme]-L-cysteine + [E2 ubiquitin-conjugating enzyme]-L-cysteine = [E1 ubiquitin-activating enzyme]-L-cysteine + S-ubiquitinyl-[E2 ubiquitin-conjugating enzyme]-L-cysteine.. The protein operates within protein modification; protein ubiquitination. Functionally, catalyzes the covalent attachment of ubiquitin to other proteins so as to signal them for selective protein degradation. Involved in the formation of multiubiquitin chains. The sequence is that of Ubiquitin-conjugating enzyme E2 7 (UBC7) from Triticum aestivum (Wheat).